Here is a 345-residue protein sequence, read N- to C-terminus: MSSQQSKVVGLIFGGASGEHDVSIRSAATVAEGLSSGANKERYRVQHVYIDRQGRWWGDATARQVLSSGQALADDGSRPGFSGFPDGCLEVEIWYPVLHGPNGEDGTIQGLFSLMQRPFVGSGVLGSAVGMDKLAMKAAFSAAGLPQGPYRPVLASELVSNSQLLEELETQLGYPCFIKPANLGSSVGISKATNRSELQAGLDLAASHDSRLLVEKGLQVRELECAVLGGQHLKASVLGEVSFDADWYDYETKYSSGLSSTQIPADLPEAISSRAQHLAIEAVQAVGASGLSRVDFFYEEASGNLLINEINTLPGFTSQSMYPMLWKASGVPLEELVHQLLELAQ.

The region spanning 137 to 342 (KAAFSAAGLP…LEELVHQLLE (206 aa)) is the ATP-grasp domain. 169–224 (ETQLGYPCFIKPANLGSSVGISKATNRSELQAGLDLAASHDSRLLVEKGLQVRELE) lines the ATP pocket. Asp295, Glu309, and Asn311 together coordinate Mg(2+).

The protein belongs to the D-alanine--D-alanine ligase family. The cofactor is Mg(2+). It depends on Mn(2+) as a cofactor.

It is found in the cytoplasm. It catalyses the reaction 2 D-alanine + ATP = D-alanyl-D-alanine + ADP + phosphate + H(+). The protein operates within cell wall biogenesis; peptidoglycan biosynthesis. Its function is as follows. Cell wall formation. The polypeptide is D-alanine--D-alanine ligase (Synechococcus sp. (strain RCC307)).